A 624-amino-acid polypeptide reads, in one-letter code: DNA mismatch repair protein MutL (624 aa).

The tract at residues 355-377 (EESAPERKLPEKTPEPSYSPMKL) is disordered. Over residues 358-368 (APERKLPEKTP) the composition is skewed to basic and acidic residues.

Belongs to the DNA mismatch repair MutL/HexB family.

Its function is as follows. This protein is involved in the repair of mismatches in DNA. It is required for dam-dependent methyl-directed DNA mismatch repair. May act as a 'molecular matchmaker', a protein that promotes the formation of a stable complex between two or more DNA-binding proteins in an ATP-dependent manner without itself being part of a final effector complex. The sequence is that of DNA mismatch repair protein MutL from Bacillus velezensis (strain DSM 23117 / BGSC 10A6 / LMG 26770 / FZB42) (Bacillus amyloliquefaciens subsp. plantarum).